Reading from the N-terminus, the 605-residue chain is Membrane protein insertase YidC (605 aa).

Residues 8–28 traverse the membrane as a helical segment; that stretch reads MIIAIALSLAVLLGWNYFVAA. A compositionally biased stretch (low complexity) spans 35–47; that stretch reads RQQQAQTSASPSP. The interval 35–71 is disordered; sequence RQQQAQTSASPSPKEGGPSAPVPGTLPGASGGNPQAA. The next 4 helical transmembrane spans lie at 377–397, 451–471, 496–516, and 540–560; these read LFGN…LFFL, WPVV…FVTI, LFGL…WPIV, and FTFM…GLVI.

This sequence belongs to the OXA1/ALB3/YidC family. Type 1 subfamily. In terms of assembly, interacts with the Sec translocase complex via SecD. Specifically interacts with transmembrane segments of nascent integral membrane proteins during membrane integration.

Its subcellular location is the cell inner membrane. Its function is as follows. Required for the insertion and/or proper folding and/or complex formation of integral membrane proteins into the membrane. Involved in integration of membrane proteins that insert both dependently and independently of the Sec translocase complex, as well as at least some lipoproteins. Aids folding of multispanning membrane proteins. The protein is Membrane protein insertase YidC of Methylobacterium nodulans (strain LMG 21967 / CNCM I-2342 / ORS 2060).